We begin with the raw amino-acid sequence, 650 residues long: Acetyl-coenzyme A synthetase (650 aa).

Residues 190-193, Thr308, and Asn332 each bind CoA; that span reads RGGR. Residues 384 to 386, 408 to 413, Asp497, and Arg512 contribute to the ATP site; these read GEP and DTWWQT. Ser520 contacts CoA. Arg523 serves as a coordination point for ATP. Mg(2+) contacts are provided by Val534, His536, and Val539. Arg581 is a binding site for CoA. Lys606 is subject to N6-acetyllysine.

The protein belongs to the ATP-dependent AMP-binding enzyme family. It depends on Mg(2+) as a cofactor. Acetylated. Deacetylation by the SIR2-homolog deacetylase activates the enzyme.

It carries out the reaction acetate + ATP + CoA = acetyl-CoA + AMP + diphosphate. Catalyzes the conversion of acetate into acetyl-CoA (AcCoA), an essential intermediate at the junction of anabolic and catabolic pathways. AcsA undergoes a two-step reaction. In the first half reaction, AcsA combines acetate with ATP to form acetyl-adenylate (AcAMP) intermediate. In the second half reaction, it can then transfer the acetyl group from AcAMP to the sulfhydryl group of CoA, forming the product AcCoA. The protein is Acetyl-coenzyme A synthetase of Bradyrhizobium sp. (strain ORS 278).